The chain runs to 439 residues: Xylose isomerase (439 aa).

Active-site residues include His101 and Asp104. 7 residues coordinate Mg(2+): Glu232, Glu268, His271, Asp296, Asp307, Asp309, and Asp339.

It belongs to the xylose isomerase family. In terms of assembly, homotetramer. It depends on Mg(2+) as a cofactor.

The protein resides in the cytoplasm. The catalysed reaction is alpha-D-xylose = alpha-D-xylulofuranose. The protein is Xylose isomerase of Yersinia pseudotuberculosis serotype O:1b (strain IP 31758).